The sequence spans 115 residues: Prefoldin subunit beta (115 aa).

It belongs to the prefoldin subunit beta family. Heterohexamer of two alpha and four beta subunits.

It is found in the cytoplasm. Functionally, molecular chaperone capable of stabilizing a range of proteins. Seems to fulfill an ATP-independent, HSP70-like function in archaeal de novo protein folding. The chain is Prefoldin subunit beta from Methanococcus aeolicus (strain ATCC BAA-1280 / DSM 17508 / OCM 812 / Nankai-3).